The primary structure comprises 172 residues: 3-hydroxydecanoyl-[acyl-carrier-protein] dehydratase (172 aa).

The active site involves H71.

This sequence belongs to the thioester dehydratase family. FabA subfamily. In terms of assembly, homodimer.

It is found in the cytoplasm. The enzyme catalyses a (3R)-hydroxyacyl-[ACP] = a (2E)-enoyl-[ACP] + H2O. It carries out the reaction (3R)-hydroxydecanoyl-[ACP] = (2E)-decenoyl-[ACP] + H2O. It catalyses the reaction (2E)-decenoyl-[ACP] = (3Z)-decenoyl-[ACP]. It participates in lipid metabolism; fatty acid biosynthesis. Necessary for the introduction of cis unsaturation into fatty acids. Catalyzes the dehydration of (3R)-3-hydroxydecanoyl-ACP to E-(2)-decenoyl-ACP and then its isomerization to Z-(3)-decenoyl-ACP. Can catalyze the dehydratase reaction for beta-hydroxyacyl-ACPs with saturated chain lengths up to 16:0, being most active on intermediate chain length. In Edwardsiella ictaluri (strain 93-146), this protein is 3-hydroxydecanoyl-[acyl-carrier-protein] dehydratase.